The following is a 248-amino-acid chain: Ubiquinone biosynthesis O-methyltransferase (248 aa).

R41, G72, D93, and M136 together coordinate S-adenosyl-L-methionine.

The protein belongs to the methyltransferase superfamily. UbiG/COQ3 family.

It catalyses the reaction a 3-demethylubiquinol + S-adenosyl-L-methionine = a ubiquinol + S-adenosyl-L-homocysteine + H(+). The catalysed reaction is a 3-(all-trans-polyprenyl)benzene-1,2-diol + S-adenosyl-L-methionine = a 2-methoxy-6-(all-trans-polyprenyl)phenol + S-adenosyl-L-homocysteine + H(+). It functions in the pathway cofactor biosynthesis; ubiquinone biosynthesis. Functionally, O-methyltransferase that catalyzes the 2 O-methylation steps in the ubiquinone biosynthetic pathway. The polypeptide is Ubiquinone biosynthesis O-methyltransferase (Rhizobium rhizogenes (strain K84 / ATCC BAA-868) (Agrobacterium radiobacter)).